A 375-amino-acid polypeptide reads, in one-letter code: Pectate lyase 1 (375 aa).

A signal peptide spans Met1–Ser21. Cys28 and Cys45 are joined by a disulfide. An N-linked (GlcNAc...) asparagine glycan is attached at Asn110. Cys128 and Cys147 are disulfide-bonded. Asn148 carries N-linked (GlcNAc...) asparagine glycosylation. Asp170 is a binding site for Ca(2+). The N-linked (GlcNAc...) asparagine glycan is linked to Asn178. The Ca(2+) site is built by Asp194 and Asp198. Residue Arg250 is part of the active site. Asn293 carries N-linked (GlcNAc...) asparagine glycosylation. Cys306 and Cys312 form a disulfide bridge. Residue Asn352 is glycosylated (N-linked (GlcNAc...) asparagine).

The protein belongs to the polysaccharide lyase 1 family. Amb a subfamily. Requires Ca(2+) as cofactor.

The enzyme catalyses Eliminative cleavage of (1-&gt;4)-alpha-D-galacturonan to give oligosaccharides with 4-deoxy-alpha-D-galact-4-enuronosyl groups at their non-reducing ends.. It functions in the pathway glycan metabolism; pectin degradation; 2-dehydro-3-deoxy-D-gluconate from pectin: step 2/5. Has pectate lyase activity. The polypeptide is Pectate lyase 1 (Chamaecyparis obtusa (Hinoki false-cypress)).